Here is a 334-residue protein sequence, read N- to C-terminus: Heme A synthase (334 aa).

5 helical membrane passes run 6-26, 93-113, 119-139, 154-174, and 189-209; these read ITRW…IGGI, GRIT…QGVI, LPYI…WYMV, LAFH…QLIK, and LIFS…GALV. His-253 is a heme binding site. The next 3 membrane-spanning stretches (helical) occupy residues 255–275, 282–302, and 305–325; these read LGGF…FKVK, IAYF…ITIV, and VPII…SIII. His-313 provides a ligand contact to heme.

The protein belongs to the COX15/CtaA family. Type 2 subfamily. In terms of assembly, interacts with CtaB. It depends on heme b as a cofactor.

Its subcellular location is the cell membrane. The enzyme catalyses Fe(II)-heme o + 2 A + H2O = Fe(II)-heme a + 2 AH2. It functions in the pathway porphyrin-containing compound metabolism; heme A biosynthesis; heme A from heme O: step 1/1. In terms of biological role, catalyzes the conversion of heme O to heme A by two successive hydroxylations of the methyl group at C8. The first hydroxylation forms heme I, the second hydroxylation results in an unstable dihydroxymethyl group, which spontaneously dehydrates, resulting in the formyl group of heme A. In Rickettsia prowazekii (strain Madrid E), this protein is Heme A synthase.